Consider the following 355-residue polypeptide: Blue-sensitive opsin (355 aa).

Residues 1–41 lie on the Extracellular side of the membrane; it reads MKSRPQEFQEDFYIPIPLDTNNITALSPFLVPQDHLGGSGI. A glycan (N-linked (GlcNAc...) asparagine) is linked at Asn-22. Residues 42–66 form a helical membrane-spanning segment; it reads FMIMTVFMLFLFIGGTSINVLTIVC. Residues 67-78 are Cytoplasmic-facing; that stretch reads TVQYKKLRSHLN. The helical transmembrane segment at 79-104 threads the bilayer; it reads YILVNLAISNLLVSTVGSFTAFVSFL. Residues 105-118 lie on the Extracellular side of the membrane; the sequence is NRYFIFGPTACKIE. Cys-115 and Cys-192 are disulfide-bonded. Residues 119–138 form a helical membrane-spanning segment; sequence GFVATLGGMVSLWSLSVVAF. Over 139 to 157 the chain is Cytoplasmic; that stretch reads ERWLVICKPVGNFSFKGTH. A helical transmembrane segment spans residues 158–181; it reads AIIGCALTWFFALLASTPPLFGWS. At 182 to 207 the chain is on the extracellular side; that stretch reads RYIPEGLQCSCGPDWYTTENKYNNES. N-linked (GlcNAc...) asparagine glycosylation is present at Asn-205. Residues 208-235 form a helical membrane-spanning segment; that stretch reads YVMFLFCFCFGFPFTVILFCYGQLLFTL. At 236 to 257 the chain is on the cytoplasmic side; the sequence is KSAAKAQADSASTQKAEREVTK. Residues 258–281 form a helical membrane-spanning segment; it reads MVVVMVMGFLVCWLPYASFALWVV. Topologically, residues 282 to 289 are extracellular; the sequence is FNRGQSFD. Residues 290–314 form a helical membrane-spanning segment; it reads LRLGTIPSCFSKASTVYNPVIYVFM. N6-(retinylidene)lysine is present on Lys-301. The Cytoplasmic portion of the chain corresponds to 315–355; that stretch reads NKQFRSCMMKLIFCGKSPFGDDEEASSSSQVTQVSSVGPEK. Positions 334 to 355 are disordered; sequence GDDEEASSSSQVTQVSSVGPEK. Residues 340–355 show a composition bias toward low complexity; the sequence is SSSSQVTQVSSVGPEK.

The protein belongs to the G-protein coupled receptor 1 family. Opsin subfamily. Post-translationally, phosphorylated on some or all of the serine and threonine residues present in the C-terminal region. In terms of tissue distribution, the color pigments are found in the cone photoreceptor cells.

The protein resides in the membrane. In terms of biological role, visual pigments are the light-absorbing molecules that mediate vision. They consist of an apoprotein, opsin, covalently linked to cis-retinal. The sequence is that of Blue-sensitive opsin (B23) from Psalidodon fasciatus (Banded astyanax).